We begin with the raw amino-acid sequence, 2172 residues long: Non-reducing polyketide synthase dpfgA (2172 aa).

The segment at 74 to 181 is N-terminal acylcarrier protein transacylase domain (SAT); it reads EWIKCGNSSL…LALCVGALVD (108 aa). The Ketosynthase family 3 (KS3) domain maps to 389 to 783; it reads DDSIAIIGVS…GTNAAMLVCQ (395 aa). Residues cysteine 529, histidine 665, and histidine 706 each act as for beta-ketoacyl synthase activity in the active site. The interval 895-1197 is malonyl-CoA:ACP transacylase (MAT) domain; sequence VFAGQTGRQA…SFHSILLQGQ (303 aa). Serine 981 acts as the For acyl/malonyl transferase activity in catalysis. Positions 1270–1403 are N-terminal hotdog fold; that stretch reads PELVSLAGPT…GTINWQGQGC (134 aa). The PKS/mFAS DH domain occupies 1270 to 1581; sequence PELVSLAGPT…LKRIPIRSLQ (312 aa). The tract at residues 1277 to 1575 is product template (PT) domain; that stretch reads GPTDGETVEF…EIIGASLKRI (299 aa). The interval 1428–1581 is C-terminal hotdog fold; it reads SASTVQGLFV…LKRIPIRSLQ (154 aa). 2 disordered regions span residues 1608–1631 and 1650–1672; these read DSDS…HADF and YPMD…VLSD. The span at 1650 to 1668 shows a compositional bias: low complexity; sequence YPMDSSSFSSAQPPSSASS. The Carrier domain occupies 1671-1747; that stretch reads SDHDQESTAL…DLYRMVLNHD (77 aa). The residue at position 1707 (serine 1707) is an O-(pantetheine 4'-phosphoryl)serine. Positions 1751-1773 are disordered; the sequence is DRGSTVLSDKAPKSKSDSSLHGQ. A methyltransferase (CMeT) domain region spans residues 1975–2155; the sequence is EFLHRVLSRL…DAGFIHVDWT (181 aa).

The protein operates within secondary metabolite biosynthesis; terpenoid biosynthesis. Functionally, non-reducing polyketide synthase; part of the gene cluster that mediates the biosynthesis of diterpenoid pyrones. The first step of the pathway is the synthesis of the alpha-pyrone moiety by the polyketide synthase dpfgA via condensation of one acetyl-CoA starter unit with 3 malonyl-CoA units and 2 methylations. The alpha-pyrone is then combined with geranylgeranyl pyrophosphate (GGPP) formed by the GGPP synthase dpfgD through the action of the prenyltransferase dpfgC to yield a linear alpha-pyrone diterpenoid. Subsequent steps in the diterpenoid pyrone biosynthetic pathway involve the decalin core formation, which is initiated by the epoxidation of the C10-C11 olefin by the FAD-dependent oxidoreductase dpfgE, and is followed by a cyclization cascade catalyzed by the terpene cyclase dpfgB. The short chain dehydrogenase/reductase dpfgG then oxidizes the 8S hydroxy group to a ketone and the short chain dehydrogenase/reductase dpfgH reduces the ketone to the 8R hydroxy group to yield higginsianin B. Higginsianin B is further methylated by the methyltransferase dpfgI to produce the intermediate named FDDP B. The cytochrome P450 monooxygenase dfgpJ then catalyzes a three-step oxidation at C-27 to generate a carboxylic acid as well as C-26 hydroxylation. Finally, methyltransferase dpfgK methylates the carboxylic acid generated by dpfgJ, yielding the final diterpenoid pyrones from the pathway which were named FDDP D and FDDP E. The protein is Non-reducing polyketide synthase dpfgA of Gibberella zeae (strain ATCC MYA-4620 / CBS 123657 / FGSC 9075 / NRRL 31084 / PH-1) (Wheat head blight fungus).